Consider the following 398-residue polypeptide: Cytochrome b (398 aa).

Transmembrane regions (helical) follow at residues 38-58, 82-104, 119-139, and 185-205; these read FGSL…FLAM, WLLR…LHIF, VWCL…IGYV, and FFSL…LHLA. Heme b is bound by residues His88 and His102. Positions 189 and 203 each coordinate heme b. His208 lines the a ubiquinone pocket. 4 helical membrane-spanning segments follow: residues 231-251, 295-315, 327-347, and 354-373; these read FYVK…IWIF, AGGV…PFFK, IYQG…WIGC, and FVTI…AITP.

Belongs to the cytochrome b family. As to quaternary structure, the main subunits of complex b-c1 are: cytochrome b, cytochrome c1 and the Rieske protein. The cofactor is heme b.

The protein resides in the mitochondrion inner membrane. Its function is as follows. Component of the ubiquinol-cytochrome c reductase complex (complex III or cytochrome b-c1 complex) that is part of the mitochondrial respiratory chain. The b-c1 complex mediates electron transfer from ubiquinol to cytochrome c. Contributes to the generation of a proton gradient across the mitochondrial membrane that is then used for ATP synthesis. The chain is Cytochrome b (MT-CYB) from Triticum aestivum (Wheat).